Consider the following 206-residue polypeptide: Large ribosomal subunit protein uL3 (206 aa).

Positions 127-151 are disordered; it reads SGGPSSHGSKFHRHLGGTGQATTPA.

It belongs to the universal ribosomal protein uL3 family. Part of the 50S ribosomal subunit. Forms a cluster with proteins L14 and L19.

Functionally, one of the primary rRNA binding proteins, it binds directly near the 3'-end of the 23S rRNA, where it nucleates assembly of the 50S subunit. The protein is Large ribosomal subunit protein uL3 of Borreliella burgdorferi (strain ATCC 35210 / DSM 4680 / CIP 102532 / B31) (Borrelia burgdorferi).